Reading from the N-terminus, the 237-residue chain is Ribitol-5-phosphate cytidylyltransferase (237 aa).

Residues 7 to 10 (LAGG) and 80 to 86 (GEDRNET) each bind CTP.

It belongs to the IspD/TarI cytidylyltransferase family. TarI subfamily.

It carries out the reaction D-ribitol 5-phosphate + CTP + H(+) = CDP-L-ribitol + diphosphate. It participates in cell wall biogenesis; poly(ribitol phosphate) teichoic acid biosynthesis. In terms of biological role, catalyzes the transfer of the cytidylyl group of CTP to D-ribitol 5-phosphate. The chain is Ribitol-5-phosphate cytidylyltransferase from Listeria innocua serovar 6a (strain ATCC BAA-680 / CLIP 11262).